The sequence spans 701 residues: Transcription factor PDR8 (701 aa).

Positions methionine 1 to glycine 22 are disordered. Residues cysteine 31 to cysteine 59 constitute a DNA-binding region (zn(2)-C6 fungal-type).

The protein resides in the cytoplasm. It is found in the nucleus. Its function is as follows. Up-regulates the transcription of the genes for ATP-binding cassette (ABC) transporters YOR1 and PDR15, for major facilitator superfamily transporter AZR1, for pleiotropic drug resistance SNG1, for alpha-glucosidase YJL216C and for YLL056C. The protein is Transcription factor PDR8 (PDR8) of Saccharomyces cerevisiae (strain ATCC 204508 / S288c) (Baker's yeast).